A 208-amino-acid polypeptide reads, in one-letter code: Large ribosomal subunit protein uL4 (208 aa).

A disordered region spans residues 49 to 78 (KAKGISDISGTTAKPYRQKHTGRARQGSLR).

This sequence belongs to the universal ribosomal protein uL4 family. Part of the 50S ribosomal subunit.

Functionally, one of the primary rRNA binding proteins, this protein initially binds near the 5'-end of the 23S rRNA. It is important during the early stages of 50S assembly. It makes multiple contacts with different domains of the 23S rRNA in the assembled 50S subunit and ribosome. Its function is as follows. Forms part of the polypeptide exit tunnel. This Anaplasma phagocytophilum (strain HZ) protein is Large ribosomal subunit protein uL4.